Reading from the N-terminus, the 495-residue chain is Ectonucleoside triphosphate diphosphohydrolase 2 (495 aa).

The Cytoplasmic segment spans residues 1–4 (MAGK). A helical transmembrane segment spans residues 5–25 (LVSLVPPLLLAAVGLAGLLLL). Topologically, residues 26-462 (CVPTQDVREP…PGLRKGTHFS (437 aa)) are extracellular. N-linked (GlcNAc...) asparagine glycosylation occurs at N64. A disulfide bridge connects residues C75 and C99. N-linked (GlcNAc...) asparagine glycosylation occurs at N129. The Proton acceptor role is filled by E165. 204 to 208 (GASTQ) contributes to the ATP binding site. 2 cysteine pairs are disulfide-bonded: C242/C284 and C265/C310. N-linked (GlcNAc...) asparagine glycosylation is found at N294 and N319. Cystine bridges form between C323/C328 and C377/C399. N-linked (GlcNAc...) asparagine glycosylation is found at N378 and N443. The chain crosses the membrane as a helical span at residues 463-483 (SWVALLLLFTVLILAALVLLL). Topologically, residues 484–495 (RQVRSAKSPGAL) are cytoplasmic.

This sequence belongs to the GDA1/CD39 NTPase family. Ca(2+) serves as cofactor. Mg(2+) is required as a cofactor.

It is found in the cell membrane. In the nervous system, could hydrolyze ATP and other nucleotides to regulate purinergic neurotransmission. Hydrolyzes ADP only to a marginal extent. The chain is Ectonucleoside triphosphate diphosphohydrolase 2 (Entpd2) from Mus musculus (Mouse).